Reading from the N-terminus, the 275-residue chain is Diaminopimelate epimerase (275 aa).

Residues N13, Q46, and N65 each coordinate substrate. C74 acts as the Proton donor in catalysis. Residues 75–76 (GN), N158, N191, and 209–210 (ER) contribute to the substrate site. The active-site Proton acceptor is C218. 219 to 220 (GT) lines the substrate pocket.

The protein belongs to the diaminopimelate epimerase family. As to quaternary structure, homodimer.

It is found in the cytoplasm. The catalysed reaction is (2S,6S)-2,6-diaminopimelate = meso-2,6-diaminopimelate. Its pathway is amino-acid biosynthesis; L-lysine biosynthesis via DAP pathway; DL-2,6-diaminopimelate from LL-2,6-diaminopimelate: step 1/1. Its function is as follows. Catalyzes the stereoinversion of LL-2,6-diaminopimelate (L,L-DAP) to meso-diaminopimelate (meso-DAP), a precursor of L-lysine and an essential component of the bacterial peptidoglycan. The protein is Diaminopimelate epimerase of Nitrosomonas europaea (strain ATCC 19718 / CIP 103999 / KCTC 2705 / NBRC 14298).